Here is a 430-residue protein sequence, read N- to C-terminus: Adenylosuccinate synthetase (430 aa).

GTP contacts are provided by residues 12 to 18 and 40 to 42; these read GDEGKGK and GHT. The active-site Proton acceptor is the aspartate 13. Mg(2+) contacts are provided by aspartate 13 and glycine 40. Residues 13 to 16, 38 to 41, threonine 130, arginine 144, glutamine 224, threonine 239, and arginine 303 each bind IMP; these read DEGK and NAGH. The active-site Proton donor is histidine 41. Residue 299 to 305 participates in substrate binding; sequence VNTGRKR. Residues arginine 305, 331–333, and 413–415 contribute to the GTP site; these read KLD and STS.

This sequence belongs to the adenylosuccinate synthetase family. As to quaternary structure, homodimer. Mg(2+) serves as cofactor.

The protein localises to the cytoplasm. The catalysed reaction is IMP + L-aspartate + GTP = N(6)-(1,2-dicarboxyethyl)-AMP + GDP + phosphate + 2 H(+). It functions in the pathway purine metabolism; AMP biosynthesis via de novo pathway; AMP from IMP: step 1/2. Its function is as follows. Plays an important role in the de novo pathway of purine nucleotide biosynthesis. Catalyzes the first committed step in the biosynthesis of AMP from IMP. The polypeptide is Adenylosuccinate synthetase (Rhodopseudomonas palustris (strain ATCC BAA-98 / CGA009)).